We begin with the raw amino-acid sequence, 85 residues long: Large ribosomal subunit protein bL31B (85 aa).

It belongs to the bacterial ribosomal protein bL31 family. Type B subfamily. As to quaternary structure, part of the 50S ribosomal subunit.

The polypeptide is Large ribosomal subunit protein bL31B (Staphylococcus epidermidis (strain ATCC 35984 / DSM 28319 / BCRC 17069 / CCUG 31568 / BM 3577 / RP62A)).